Reading from the N-terminus, the 273-residue chain is Dermonecrotic toxin LapSicTox-alphaIB1b3 (273 aa).

Residue histidine 5 is part of the active site. The Mg(2+) site is built by glutamate 25 and aspartate 27. Histidine 41 functions as the Nucleophile in the catalytic mechanism. 2 cysteine pairs are disulfide-bonded: cysteine 45-cysteine 51 and cysteine 47-cysteine 190. A Mg(2+)-binding site is contributed by aspartate 85. An N-linked (GlcNAc...) asparagine glycan is attached at asparagine 250.

This sequence belongs to the arthropod phospholipase D family. Class II subfamily. It depends on Mg(2+) as a cofactor. Expressed by the venom gland.

Its subcellular location is the secreted. It carries out the reaction an N-(acyl)-sphingosylphosphocholine = an N-(acyl)-sphingosyl-1,3-cyclic phosphate + choline. The catalysed reaction is an N-(acyl)-sphingosylphosphoethanolamine = an N-(acyl)-sphingosyl-1,3-cyclic phosphate + ethanolamine. The enzyme catalyses a 1-acyl-sn-glycero-3-phosphocholine = a 1-acyl-sn-glycero-2,3-cyclic phosphate + choline. It catalyses the reaction a 1-acyl-sn-glycero-3-phosphoethanolamine = a 1-acyl-sn-glycero-2,3-cyclic phosphate + ethanolamine. Functionally, dermonecrotic toxins cleave the phosphodiester linkage between the phosphate and headgroup of certain phospholipids (sphingolipid and lysolipid substrates), forming an alcohol (often choline) and a cyclic phosphate. This toxin acts on sphingomyelin (SM). It may also act on ceramide phosphoethanolamine (CPE), lysophosphatidylcholine (LPC) and lysophosphatidylethanolamine (LPE), but not on lysophosphatidylserine (LPS), and lysophosphatidylglycerol (LPG). It acts by transphosphatidylation, releasing exclusively cyclic phosphate products as second products. Induces dermonecrosis, hemolysis, increased vascular permeability, edema, inflammatory response, and platelet aggregation. This is Dermonecrotic toxin LapSicTox-alphaIB1b3 from Loxosceles apachea (Apache recluse spider).